A 111-amino-acid chain; its full sequence is Protein IDA-LIKE 5 (111 aa).

The signal sequence occupies residues 1–27; it reads MGNKRIKAMMILVVMIMMVFSWRICEA. Positions 46-56 are enriched in basic residues; it reads RRPNPRNHHHQ. The tract at residues 46 to 65 is disordered; sequence RRPNPRNHHHQNQGFNGDDY.

As to expression, expressed mainly in flowers. Lower levels in buds and seedlings. Detected in vascular tissues and in hydathodes.

It localises to the secreted. The protein resides in the extracellular space. Functionally, may be involved in floral abscission. This is Protein IDA-LIKE 5 (IDL5) from Arabidopsis thaliana (Mouse-ear cress).